The chain runs to 425 residues: Apolipoprotein N-acyltransferase (425 aa).

A run of 6 helical transmembrane segments spans residues 12 to 32, 34 to 54, 60 to 80, 88 to 108, 120 to 140, and 142 to 162; these read LLAC…AYAI, NPYI…LAFL, SAFA…ALSF, LLPL…YLLL, FLGS…DSFF, and YSVF…CIFL. Residues 201–425 form the CN hydrolase domain; it reads VSTKTPQDLK…LGDILFRKRS (225 aa). The Proton acceptor role is filled by glutamate 242. Lysine 296 is a catalytic residue. Cysteine 349 functions as the Nucleophile in the catalytic mechanism.

The protein belongs to the CN hydrolase family. Apolipoprotein N-acyltransferase subfamily.

Its subcellular location is the cell inner membrane. The catalysed reaction is N-terminal S-1,2-diacyl-sn-glyceryl-L-cysteinyl-[lipoprotein] + a glycerophospholipid = N-acyl-S-1,2-diacyl-sn-glyceryl-L-cysteinyl-[lipoprotein] + a 2-acyl-sn-glycero-3-phospholipid + H(+). The protein operates within protein modification; lipoprotein biosynthesis (N-acyl transfer). Functionally, catalyzes the phospholipid dependent N-acylation of the N-terminal cysteine of apolipoprotein, the last step in lipoprotein maturation. The sequence is that of Apolipoprotein N-acyltransferase from Helicobacter pylori (strain ATCC 700392 / 26695) (Campylobacter pylori).